The chain runs to 352 residues: Putative F-box protein At5g14160 (352 aa).

One can recognise an F-box domain in the interval 14-60 (GVDWSELPEDVIRLVLRRLRLSDFHRARAVCSTWCRVWGDCVSKPNQ).

This is Putative F-box protein At5g14160 from Arabidopsis thaliana (Mouse-ear cress).